The following is a 617-amino-acid chain: Proline--tRNA ligase (617 aa).

This sequence belongs to the class-II aminoacyl-tRNA synthetase family. ProS type 1 subfamily. In terms of assembly, homodimer.

It is found in the cytoplasm. The enzyme catalyses tRNA(Pro) + L-proline + ATP = L-prolyl-tRNA(Pro) + AMP + diphosphate. In terms of biological role, catalyzes the attachment of proline to tRNA(Pro) in a two-step reaction: proline is first activated by ATP to form Pro-AMP and then transferred to the acceptor end of tRNA(Pro). As ProRS can inadvertently accommodate and process non-cognate amino acids such as alanine and cysteine, to avoid such errors it has two additional distinct editing activities against alanine. One activity is designated as 'pretransfer' editing and involves the tRNA(Pro)-independent hydrolysis of activated Ala-AMP. The other activity is designated 'posttransfer' editing and involves deacylation of mischarged Ala-tRNA(Pro). The misacylated Cys-tRNA(Pro) is not edited by ProRS. In Streptococcus agalactiae serotype III (strain NEM316), this protein is Proline--tRNA ligase.